A 442-amino-acid polypeptide reads, in one-letter code: Putative zinc metalloprotease PM1991 (442 aa).

Position 21 (histidine 21) interacts with Zn(2+). Glutamate 22 is a catalytic residue. Position 25 (histidine 25) interacts with Zn(2+). A helical membrane pass occupies residues 97 to 119 (AFVIAAGPIANFLFAILAYFTIY). Positions 198–286 (DWRFDPEKES…FSFVVLTPEL (89 aa)) constitute a PDZ domain. 2 helical membrane-spanning segments follow: residues 366–388 (IGLI…MNLF) and 418–440 (LSYR…NDFL).

It belongs to the peptidase M50B family. Zn(2+) serves as cofactor.

The protein resides in the cell inner membrane. This is Putative zinc metalloprotease PM1991 from Pasteurella multocida (strain Pm70).